Consider the following 395-residue polypeptide: RNA polymerase II elongation factor ELL3 (395 aa).

Disordered stretches follow at residues 129 to 177 and 189 to 281; these read LTEG…SEPM and PSRE…SPEE. Ser-242 carries the phosphoserine modification. The segment covering 243–260 has biased composition (acidic residues); that stretch reads QEGEDWGQDEDEEGDEDG. Residues 269–279 show a composition bias toward low complexity; it reads SAPSASESPSP. Positions 283-393 constitute an OCEL domain; the sequence is PDYLLQYRAI…LILEFEEKNR (111 aa).

The protein belongs to the ELL/occludin family. As to quaternary structure, component of the little elongation complex (LEC), at least composed of ELL (ELL, ELL2 or ELL3), ZC3H8, ICE1 and ICE2. Component of the super elongation complex (SEC), at least composed of EAF1, EAF2, CDK9, MLLT3/AF9, AFF (AFF1 or AFF4), the P-TEFb complex and ELL (ELL, ELL2 or ELL3). Interacts with AFF4. Actively expressed in embryonic stem cells (ES cells), while it is weakly expressed in differentiated cells.

Its subcellular location is the nucleus. Enhancer-binding elongation factor that specifically binds enhancers in embryonic stem cells (ES cells), marks them, and is required for their future activation during stem cell specification. Elongation factor component of the super elongation complex (SEC), a complex required to increase the catalytic rate of RNA polymerase II transcription by suppressing transient pausing by the polymerase at multiple sites along the DNA. Component of the little elongation complex (LEC), a complex required to regulate small nuclear RNA (snRNA) gene transcription by RNA polymerase II and III. Does not only bind to enhancer regions of active genes, but also marks the enhancers that are in a poised or inactive state in ES cells and is required for establishing proper RNA polymerase II occupancy at developmentally regulated genes in a cohesin-dependent manner. Probably required for priming developmentally regulated genes for later recruitment of the super elongation complex (SEC), for transcriptional activation during differentiation. Required for recruitment of P-TEFb within SEC during differentiation. Probably preloaded on germ cell chromatin, suggesting that it may prime gene activation by marking enhancers as early as in the germ cells. Promoting epithelial-mesenchymal transition (EMT). The polypeptide is RNA polymerase II elongation factor ELL3 (Ell3) (Mus musculus (Mouse)).